The primary structure comprises 482 residues: UDP-N-acetylmuramate--L-alanine ligase (482 aa).

115–121 (GTHGKTT) provides a ligand contact to ATP.

Belongs to the MurCDEF family.

It is found in the cytoplasm. It carries out the reaction UDP-N-acetyl-alpha-D-muramate + L-alanine + ATP = UDP-N-acetyl-alpha-D-muramoyl-L-alanine + ADP + phosphate + H(+). The protein operates within cell wall biogenesis; peptidoglycan biosynthesis. In terms of biological role, cell wall formation. The sequence is that of UDP-N-acetylmuramate--L-alanine ligase from Rhodospirillum centenum (strain ATCC 51521 / SW).